A 117-amino-acid chain; its full sequence is Large ribosomal subunit protein uL18 (117 aa).

This sequence belongs to the universal ribosomal protein uL18 family. In terms of assembly, part of the 50S ribosomal subunit; part of the 5S rRNA/L5/L18/L25 subcomplex. Contacts the 5S and 23S rRNAs.

In terms of biological role, this is one of the proteins that bind and probably mediate the attachment of the 5S RNA into the large ribosomal subunit, where it forms part of the central protuberance. In Haemophilus ducreyi (strain 35000HP / ATCC 700724), this protein is Large ribosomal subunit protein uL18.